We begin with the raw amino-acid sequence, 373 residues long: P2Y purinoceptor 1 (373 aa).

Topologically, residues 1-51 are extracellular; it reads MTEVLWPAAPNGTDAAFLASPGFHWGNSTATSTAAAAAPFRCALTKTGFQF. N-linked (GlcNAc...) asparagine glycans are attached at residues Asn-11 and Asn-27. Intrachain disulfides connect Cys-42/Cys-296 and Cys-124/Cys-202. Lys-46 lines the ADP pocket. A helical membrane pass occupies residues 52–74; that stretch reads YYLPAVYIVVFIIGFLGNSIAIW. Residues 75–87 lie on the Cytoplasmic side of the membrane; that stretch reads MFVFHMKPWSGIS. Residues 88 to 109 form a helical membrane-spanning segment; the sequence is VYMFNLALADFLYVLTLPALIF. Topologically, residues 110–125 are extracellular; the sequence is YYFNKTNWIFGDAMCK. Residue Asn-113 is glycosylated (N-linked (GlcNAc...) asparagine). Residues 126-147 form a helical membrane-spanning segment; it reads LQRFIFHVNLYGSILFLTCISA. Over 148–166 the chain is Cytoplasmic; the sequence is HRYSGVVYPLKSLGRLKKK. A helical transmembrane segment spans residues 167-188; that stretch reads NAVYISVLVWLIVVVAISPILF. Topologically, residues 189-214 are extracellular; it reads YSGTGIRKNKTITCYDTTSDEYLRSY. A glycan (N-linked (GlcNAc...) asparagine) is linked at Asn-197. Residue 203 to 205 participates in ADP binding; the sequence is YDT. A helical membrane pass occupies residues 215–237; that stretch reads FIYSMCTTVAMFCVPLVLILGCY. The Cytoplasmic portion of the chain corresponds to 238–260; the sequence is GLIVRALIYKDLDNSPLRRKSIY. The chain crosses the membrane as a helical span at residues 261-284; it reads LVIIVLTVFAVSYIPFHVMKTMNL. ADP contacts are provided by residues 283–287, 303–306, and Arg-310; these read NLRAR and YATY. Over 285–303 the chain is Extracellular; sequence RARLDFQTPEMCTFNDRVY. The helical transmembrane segment at 304-325 threads the bilayer; sequence ATYQVTRGLASLNSCVDPILYF. The Cytoplasmic portion of the chain corresponds to 326–373; sequence LAGDTFRRRLSRATRKASRRSEANLQSKSEDMTLNILSEFKQNGDTSL.

The protein belongs to the G-protein coupled receptor 1 family.

The protein resides in the cell membrane. Its function is as follows. Receptor for extracellular adenine nucleotides such as ADP. In platelets, binding to ADP leads to mobilization of intracellular calcium ions via activation of phospholipase C, a change in platelet shape, and ultimately platelet aggregation. The polypeptide is P2Y purinoceptor 1 (P2RY1) (Cavia porcellus (Guinea pig)).